A 1152-amino-acid chain; its full sequence is P3N-PIPO polyprotein (1152 aa).

Positions 292-437 (VMNQQTLMAF…HSITHRMVQY (146 aa)) constitute a Peptidase S30 domain. Residues histidine 345, aspartate 354, and serine 388 each act as for P1 proteinase activity in the active site. The short motif at 489–492 (KITC) is the Involved in interaction with stylet and aphid transmission element. The Involved in virions binding and aphid transmission signature appears at 747 to 749 (PTK). A Peptidase C6 domain is found at 773–895 (MFVTKDGYCY…ESEMQHYRVG (123 aa)). Residues cysteine 781 and histidine 854 each act as for helper component proteinase activity in the active site.

The protein belongs to the potyviridae P3N-PIPO polyprotein family. As to quaternary structure, interacts (via PIPO domain) with host PCaP1 protein; this interaction may help to anchor the movement complex to the plasma membrane from which the complex could move to the plasmodesmata. In terms of processing, potyviral RNA is expressed as two polyproteins which undergo post-translational proteolytic processing. Genome polyprotein is processed by NIa-pro, P1 and HC-pro proteinases resulting in the production of at least ten individual proteins. P3N-PIPO is cleaved by P1 and HC-pro proteinases resulting in the production of three individual proteins. The P1 proteinase and the HC-pro cleave only their respective C-termini autocatalytically.

It is found in the host cell junction. It localises to the host plasmodesma. The enzyme catalyses Hydrolyzes a Gly-|-Gly bond at its own C-terminus, commonly in the sequence -Tyr-Xaa-Val-Gly-|-Gly, in the processing of the potyviral polyprotein.. Required for aphid transmission and also has proteolytic activity. Only cleaves a Gly-Gly dipeptide at its own C-terminus. Interacts with virions and aphid stylets. Acts as a suppressor of RNA-mediated gene silencing, also known as post-transcriptional gene silencing (PTGS), a mechanism of plant viral defense that limits the accumulation of viral RNAs. May have RNA-binding activity. Its function is as follows. Allows efficient cell to cell propagation, by bypassing the host cell wall barrier. Transports viral genome to neighboring plant cells directly through plasmosdesmata, without any budding. This is P3N-PIPO polyprotein from Lettuce mosaic virus (strain 0 / isolate French) (LMV).